The chain runs to 261 residues: [LysW]-aminoadipate/[LysW]-glutamate kinase (261 aa).

Residues G35 to G36, R62, and N166 contribute to the substrate site.

This sequence belongs to the acetylglutamate kinase family. LysZ subfamily.

It localises to the cytoplasm. The enzyme catalyses [amino-group carrier protein]-C-terminal-N-(1,4-dicarboxybutan-1-yl)-L-glutamine + ATP = [amino-group carrier protein]-C-terminal-N-(1-carboxy-5-phosphooxy-5-oxopentan-1-yl)-L-glutamine + ADP. It catalyses the reaction [amino-group carrier protein]-C-terminal-gamma-(L-glutamyl)-L-glutamate + ATP = [amino-group carrier protein]-C-terminal-gamma-(5-phospho-L-glutamyl)-L-glutamate + ADP. It functions in the pathway amino-acid biosynthesis; L-lysine biosynthesis via AAA pathway; L-lysine from L-alpha-aminoadipate (Thermus route): step 2/5. It participates in amino-acid biosynthesis; L-arginine biosynthesis. Involved in both the arginine and lysine biosynthetic pathways. Phosphorylates the LysW-bound precursors glutamate (for arginine biosynthesis), respectively alpha-aminoadipate (for lysine biosynthesis). The chain is [LysW]-aminoadipate/[LysW]-glutamate kinase from Sulfolobus acidocaldarius (strain ATCC 33909 / DSM 639 / JCM 8929 / NBRC 15157 / NCIMB 11770).